Reading from the N-terminus, the 271-residue chain is HTH-type transcriptional repressor AllR (271 aa).

The 63-residue stretch at 21–83 (AQALERGIAI…SQLGWWHIGL (63 aa)) folds into the HTH iclR-type domain. Positions 43–62 (VSDISLNLDLPLSTTFRLLK) form a DNA-binding region, H-T-H motif. Positions 98-267 (VLSVAGPFMR…ARDISTALGL (170 aa)) constitute an IclR-ED domain. Glyoxylate is bound by residues 154-156 (SGA), Asp-207, Cys-217, and 234-236 (SIS).

Its function is as follows. Negative regulator of allantoin and glyoxylate utilization operons. Binds to the gcl promoter and to the allS-allA intergenic region. In Escherichia coli (strain UTI89 / UPEC), this protein is HTH-type transcriptional repressor AllR (allR).